A 162-amino-acid polypeptide reads, in one-letter code: 2-C-methyl-D-erythritol 2,4-cyclodiphosphate synthase (162 aa).

Residues Asp9 and His11 each contribute to the a divalent metal cation site. 4-CDP-2-C-methyl-D-erythritol 2-phosphate is bound by residues 9–11 and 35–36; these read DVH and HS. Position 43 (His43) interacts with a divalent metal cation. Residues 57–59, 62–66, 133–136, Phe140, and Arg143 each bind 4-CDP-2-C-methyl-D-erythritol 2-phosphate; these read DIG, FPDTD, and TTTE.

The protein belongs to the IspF family. As to quaternary structure, homotrimer. It depends on a divalent metal cation as a cofactor.

It catalyses the reaction 4-CDP-2-C-methyl-D-erythritol 2-phosphate = 2-C-methyl-D-erythritol 2,4-cyclic diphosphate + CMP. Its pathway is isoprenoid biosynthesis; isopentenyl diphosphate biosynthesis via DXP pathway; isopentenyl diphosphate from 1-deoxy-D-xylulose 5-phosphate: step 4/6. In terms of biological role, involved in the biosynthesis of isopentenyl diphosphate (IPP) and dimethylallyl diphosphate (DMAPP), two major building blocks of isoprenoid compounds. Catalyzes the conversion of 4-diphosphocytidyl-2-C-methyl-D-erythritol 2-phosphate (CDP-ME2P) to 2-C-methyl-D-erythritol 2,4-cyclodiphosphate (ME-CPP) with a corresponding release of cytidine 5-monophosphate (CMP). In Histophilus somni (strain 129Pt) (Haemophilus somnus), this protein is 2-C-methyl-D-erythritol 2,4-cyclodiphosphate synthase.